A 203-amino-acid chain; its full sequence is Peptide deformylase (203 aa).

Cys-121 and His-163 together coordinate Fe cation. Residue Glu-164 is part of the active site. Position 167 (His-167) interacts with Fe cation.

This sequence belongs to the polypeptide deformylase family. Fe(2+) serves as cofactor.

It carries out the reaction N-terminal N-formyl-L-methionyl-[peptide] + H2O = N-terminal L-methionyl-[peptide] + formate. In terms of biological role, removes the formyl group from the N-terminal Met of newly synthesized proteins. Requires at least a dipeptide for an efficient rate of reaction. N-terminal L-methionine is a prerequisite for activity but the enzyme has broad specificity at other positions. In Prochlorococcus marinus (strain SARG / CCMP1375 / SS120), this protein is Peptide deformylase.